A 938-amino-acid chain; its full sequence is Protein O-mannosyl-transferase Tmtc2 (938 aa).

Residue methionine 1 is a topological domain, cytoplasmic. The chain crosses the membrane as a helical span at residues 2-22 (PSLEPWLWGDSCSWLGMLAML). The Extracellular segment spans residues 23-34 (RLRLHKSNMDFT). Residues 35-55 (CLFCCSLAFVLYLNTLGAGFV) traverse the membrane as a helical segment. At 56–108 (YDDRRAILANADVSGGTPWQRSFSNDFWGTPLTDSGSHGSWRPLCVLSFRLNY) the chain is on the cytoplasmic side. The helical transmembrane segment at 109–129 (LIGGGFAPWGFHLVNNLLHCV) threads the bilayer. The Extracellular portion of the chain corresponds to 130–139 (ATALVVRVAR). The helical transmembrane segment at 140 to 160 (TLLASVWAVLAAGALFAAHPI) threads the bilayer. Over 161 to 164 (HTEA) the chain is Cytoplasmic. The helical transmembrane segment at 165–185 (VAGVVGRADLAACVCYLLTYL) threads the bilayer. The Extracellular portion of the chain corresponds to 186-208 (SYLRHMRWRESGDPRQWLALGAT). The helical transmembrane segment at 209-229 (LILAAAGLLCKETAITALLVC) threads the bilayer. Over 230-249 (ALFDVMRGLSGQVDKQRLRS) the chain is Cytoplasmic. A helical transmembrane segment spans residues 250 to 270 (VCIVLGALFCMAYCRLVIVPG). At 271–291 (PQTAFSSADNPIARTPSAWTR) the chain is on the extracellular side. A helical transmembrane segment spans residues 292-312 (LLTFLYLPVFNLRLLLQPNVL). Over 313-510 (SFDWGMDALP…HACVLIMSLS (198 aa)) the chain is Cytoplasmic. The interval 450–480 (RSSSSCSNSTNSSSSSSSSSSSSSSSSSSLS) is disordered. Residues 511-531 (FLALPFLPASNLLFYVGFVVA) traverse the membrane as a helical segment. The Extracellular segment spans residues 532 to 533 (ER). Residues 534–554 (LLYLPSVGFCLLVGYGVSKLM) traverse the membrane as a helical segment. Residues 555 to 562 (SCNQRTRN) lie on the Cytoplasmic side of the membrane. The chain crosses the membrane as a helical span at residues 563–580 (ILLLSFSLLLAAMSLRTL). Residues 581 to 938 (RRNADWRDEE…NLAKLGVTNV (358 aa)) lie on the Extracellular side of the membrane. TPR repeat units lie at residues 602–635 (PKAL…RPNM), 636–669 (ADVH…RPNL), 670–703 (AVAY…DGAA), 715–748 (SSAY…LPGL), 753–786 (EILY…QPNQ), 788–821 (AAHL…APEQ), 822–855 (ASVY…APND), 856–889 (YTLV…RPGD), and 890–923 (AHAH…QPGD). Asparagine 800 is a glycosylation site (N-linked (GlcNAc...) asparagine).

Belongs to the TMTC family.

It localises to the membrane. It is found in the endoplasmic reticulum. The enzyme catalyses a di-trans,poly-cis-dolichyl beta-D-mannosyl phosphate + L-seryl-[protein] = 3-O-(alpha-D-mannosyl)-L-seryl-[protein] + a di-trans,poly-cis-dolichyl phosphate + H(+). It catalyses the reaction a di-trans,poly-cis-dolichyl beta-D-mannosyl phosphate + L-threonyl-[protein] = 3-O-(alpha-D-mannosyl)-L-threonyl-[protein] + a di-trans,poly-cis-dolichyl phosphate + H(+). Its pathway is protein modification; protein glycosylation. In terms of biological role, transfers mannosyl residues to the hydroxyl group of serine or threonine residues. The chain is Protein O-mannosyl-transferase Tmtc2 from Drosophila melanogaster (Fruit fly).